A 296-amino-acid polypeptide reads, in one-letter code: GTPase Era (296 aa).

An Era-type G domain is found at 3 to 170; the sequence is KSGFVTIVGR…KELMFKYIPE (168 aa). Residues 11–18 form a G1 region; that stretch reads GRPNVGKS. 11-18 provides a ligand contact to GTP; that stretch reads GRPNVGKS. Positions 37–41 are G2; the sequence is QTTRN. The G3 stretch occupies residues 58–61; sequence DTPG. GTP is bound by residues 58-62 and 120-123; these read DTPGI and NKID. Residues 120–123 form a G4 region; sequence NKID. The G5 stretch occupies residues 149–151; the sequence is ISA. A KH type-2 domain is found at 201–278; the sequence is LSEEVPHGIA…YIRLWVKVKE (78 aa).

It belongs to the TRAFAC class TrmE-Era-EngA-EngB-Septin-like GTPase superfamily. Era GTPase family. Monomer.

The protein resides in the cytoplasm. It localises to the cell membrane. Functionally, an essential GTPase that binds both GDP and GTP, with rapid nucleotide exchange. Plays a role in 16S rRNA processing and 30S ribosomal subunit biogenesis and possibly also in cell cycle regulation and energy metabolism. The protein is GTPase Era of Clostridium botulinum (strain 657 / Type Ba4).